Reading from the N-terminus, the 286-residue chain is Pantothenate synthetase (286 aa).

30 to 37 (MGNLHEGH) is an ATP binding site. Histidine 37 acts as the Proton donor in catalysis. Glutamine 61 serves as a coordination point for (R)-pantoate. Residue glutamine 61 participates in beta-alanine binding. Residue 149 to 152 (GRKD) participates in ATP binding. Glutamine 155 is a (R)-pantoate binding site. ATP contacts are provided by residues valine 178 and 186 to 189 (MSSR).

It belongs to the pantothenate synthetase family. As to quaternary structure, homodimer.

Its subcellular location is the cytoplasm. It carries out the reaction (R)-pantoate + beta-alanine + ATP = (R)-pantothenate + AMP + diphosphate + H(+). The protein operates within cofactor biosynthesis; (R)-pantothenate biosynthesis; (R)-pantothenate from (R)-pantoate and beta-alanine: step 1/1. Its function is as follows. Catalyzes the condensation of pantoate with beta-alanine in an ATP-dependent reaction via a pantoyl-adenylate intermediate. The protein is Pantothenate synthetase of Alkalilimnicola ehrlichii (strain ATCC BAA-1101 / DSM 17681 / MLHE-1).